We begin with the raw amino-acid sequence, 783 residues long: ATP-dependent zinc metalloprotease FtsH (783 aa).

Positions 1 to 16 (MSETPNTNEQNNPNNQ) are enriched in low complexity. The interval 1-79 (MSETPNTNEQ…DKEEDFASRL (79 aa)) is disordered. Topologically, residues 1-86 (MSETPNTNEQ…SRLNTRPPQR (86 aa)) are cytoplasmic. Residues 35–61 (MPERPERHNQADGAPKRPGDDDRKSER) are compositionally biased toward basic and acidic residues. Residues 87–107 (ASIITIIIIFLVAFFIGSQMM) form a helical membrane-spanning segment. Topologically, residues 108 to 233 (NMVHGEETDD…EYQVTLPSNV (126 aa)) are extracellular. A helical transmembrane segment spans residues 234–254 (TEILISVLPMLLFAGLLIYFF). The Cytoplasmic segment spans residues 255-783 (SQMSKANNSQ…APQPPAAPQQ (529 aa)). Residue 325-332 (GPPGTGKT) coordinates ATP. Position 547 (H547) interacts with Zn(2+). Residue E548 is part of the active site. H551 and D623 together coordinate Zn(2+). Residues 738-771 (EAAAKAADQAEQPQVEAEPVAQVATPAAPVAPAV) show a composition bias toward low complexity. A disordered region spans residues 738–783 (EAAAKAADQAEQPQVEAEPVAQVATPAAPVAPAVPEAPQPPAAPQQ). Residues 772 to 783 (PEAPQPPAAPQQ) show a composition bias toward pro residues.

The protein in the central section; belongs to the AAA ATPase family. It in the C-terminal section; belongs to the peptidase M41 family. As to quaternary structure, homohexamer. Zn(2+) is required as a cofactor.

It localises to the cell membrane. In terms of biological role, acts as a processive, ATP-dependent zinc metallopeptidase for both cytoplasmic and membrane proteins. Plays a role in the quality control of integral membrane proteins. In Slackia heliotrinireducens (strain ATCC 29202 / DSM 20476 / NCTC 11029 / RHS 1) (Peptococcus heliotrinreducens), this protein is ATP-dependent zinc metalloprotease FtsH.